A 203-amino-acid polypeptide reads, in one-letter code: Molybdenum cofactor guanylyltransferase (203 aa).

GTP is bound by residues Leu20–Gly22, Lys33, Asn61, Asp78, and Asp108. A Mg(2+)-binding site is contributed by Asp108.

Belongs to the MobA family. Monomer. Mg(2+) serves as cofactor.

Its subcellular location is the cytoplasm. The catalysed reaction is Mo-molybdopterin + GTP + H(+) = Mo-molybdopterin guanine dinucleotide + diphosphate. Its function is as follows. Transfers a GMP moiety from GTP to Mo-molybdopterin (Mo-MPT) cofactor (Moco or molybdenum cofactor) to form Mo-molybdopterin guanine dinucleotide (Mo-MGD) cofactor. This is Molybdenum cofactor guanylyltransferase from Vibrio cholerae serotype O1 (strain ATCC 39315 / El Tor Inaba N16961).